The chain runs to 200 residues: Large ribosomal subunit protein bL25 (200 aa).

Positions 1 to 20 are disordered; the sequence is MEARELKANVRKESGKEQAR.

It belongs to the bacterial ribosomal protein bL25 family. CTC subfamily. In terms of assembly, part of the 50S ribosomal subunit; part of the 5S rRNA/L5/L18/L25 subcomplex. Contacts the 5S rRNA. Binds to the 5S rRNA independently of L5 and L18.

Its function is as follows. This is one of the proteins that binds to the 5S RNA in the ribosome where it forms part of the central protuberance. In Syntrophus aciditrophicus (strain SB), this protein is Large ribosomal subunit protein bL25.